An 802-amino-acid chain; its full sequence is Chromosome alignment-maintaining phosphoprotein 1 (802 aa).

Residue Met-1 is modified to N-acetylmethionine. Residues 88-105 are compositionally biased toward basic and acidic residues; it reads SDKWSEQPKEQPSKDTES. The interval 88 to 475 is disordered; the sequence is SDKWSEQPKE…PDLWKSSFIM (388 aa). Ser-108 is modified (phosphoserine). Residues 135-148 show a composition bias toward polar residues; sequence QKTSPSLCPESQAS. Basic and acidic residues predominate over residues 185–203; the sequence is ERVDPPCELPELEKPERGP. Residues Ser-204, Ser-207, Ser-234, Ser-237, Ser-243, Ser-252, Ser-254, Ser-265, Ser-272, Ser-276, Ser-298, Ser-309, Ser-334, Ser-345, and Ser-365 each carry the phosphoserine modification. The segment at 261-479 is mediates interaction with MAD2L2; that stretch reads ARTASPEPRK…KSSFIMESQK (219 aa). The span at 332–351 shows a compositional bias: pro residues; that stretch reads PMSPGPWKPIPSVSPGPWKP. The span at 354 to 368 shows a compositional bias: low complexity; it reads SMSTASWKSSVSSGS. Polar residues predominate over residues 369–378; it reads WKTPPTSPES. At Thr-371 the chain carries Phosphothreonine. 9 positions are modified to phosphoserine: Ser-375, Ser-394, Ser-405, Ser-416, Ser-421, Ser-425, Ser-432, Ser-434, and Ser-441. Positions 440–580 are mediates localization to the spindle and the kinetochore and is required for the attachment of spindle microtubules to the kinetochore; the sequence is VSPDQRKTSP…EIQLEAVDNA (141 aa). Thr-447 is modified (phosphothreonine). A phosphoserine mark is found at Ser-448, Ser-451, and Ser-461. At Lys-479 the chain carries N6-acetyllysine; alternate. Lys-479 is covalently cross-linked (Glycyl lysine isopeptide (Lys-Gly) (interchain with G-Cter in SUMO2); alternate). Residues Ser-497, Ser-502, and Ser-532 each carry the phosphoserine modification. Residue Lys-555 forms a Glycyl lysine isopeptide (Lys-Gly) (interchain with G-Cter in SUMO2) linkage. The interval 581–802 is mediates localization to the chromosome and the spindle and negatively regulates chromosome alignment; sequence KCDSLAQEGL…LESPLEEQQI (222 aa). Thr-593 bears the Phosphothreonine mark. Lys-596 is covalently cross-linked (Glycyl lysine isopeptide (Lys-Gly) (interchain with G-Cter in SUMO2)). A phosphoserine mark is found at Ser-603, Ser-605, Ser-617, Ser-622, Ser-641, Ser-642, and Ser-643. The interval 603 to 625 is disordered; it reads SPSSKKLKKDSQENSDAELSSSE. Lys-660 is covalently cross-linked (Glycyl lysine isopeptide (Lys-Gly) (interchain with G-Cter in SUMO2)). Ser-665 carries the post-translational modification Phosphoserine. Lys-679 participates in a covalent cross-link: Glycyl lysine isopeptide (Lys-Gly) (interchain with G-Cter in SUMO2). Residue Ser-726 is modified to Phosphoserine. The C2H2-type zinc finger occupies 728 to 750; the sequence is YKCTICGKAFLLESLLKNHVAAH.

In terms of assembly, interacts with MAD2L2. Interacts with POGZ, CBX1, CBX3 and CBX5. In terms of processing, phosphorylated by CDK1. Mitotic phosphorylation is required for the attachment of spindle microtubules to the kinetochore.

The protein resides in the nucleus. It localises to the chromosome. The protein localises to the centromere. Its subcellular location is the kinetochore. It is found in the cytoplasm. The protein resides in the cytoskeleton. It localises to the spindle. In terms of biological role, required for proper alignment of chromosomes at metaphase and their accurate segregation during mitosis. Involved in the maintenance of spindle microtubules attachment to the kinetochore during sister chromatid biorientation. May recruit CENPE and CENPF to the kinetochore. The chain is Chromosome alignment-maintaining phosphoprotein 1 (Champ1) from Mus musculus (Mouse).